We begin with the raw amino-acid sequence, 288 residues long: Phenazine biosynthesis-like domain-containing protein (288 aa).

E46 is an active-site residue.

The protein belongs to the PhzF family. As to quaternary structure, interacts with UNRIP/MAWD.

This Pongo abelii (Sumatran orangutan) protein is Phenazine biosynthesis-like domain-containing protein (PBLD).